A 726-amino-acid polypeptide reads, in one-letter code: Methionine--tRNA ligase (726 aa).

Residues 12–22 (PYVNNIPHLGN) carry the 'HIGH' region motif. Positions 143, 146, 155, and 158 each coordinate Zn(2+). The 'KMSKS' region motif lies at 330–334 (KFSKS). Lys333 is an ATP binding site. The tRNA-binding domain occupies 562 to 667 (FSEKVCLKVV…DNPIPGERII (106 aa)).

It belongs to the class-I aminoacyl-tRNA synthetase family. MetG type 1 subfamily. Homodimer. Requires Zn(2+) as cofactor.

It is found in the cytoplasm. The catalysed reaction is tRNA(Met) + L-methionine + ATP = L-methionyl-tRNA(Met) + AMP + diphosphate. Is required not only for elongation of protein synthesis but also for the initiation of all mRNA translation through initiator tRNA(fMet) aminoacylation. The protein is Methionine--tRNA ligase of Borrelia turicatae (strain 91E135).